Here is a 209-residue protein sequence, read N- to C-terminus: B3 domain-containing protein At2g31420 (209 aa).

Residues 101–198 (LSKLEKSDFL…KLCFALSSPT (98 aa)) constitute a DNA-binding region (TF-B3).

Its subcellular location is the nucleus. This chain is B3 domain-containing protein At2g31420, found in Arabidopsis thaliana (Mouse-ear cress).